We begin with the raw amino-acid sequence, 333 residues long: Glycerol-3-phosphate dehydrogenase [NAD(P)+] (333 aa).

Positions 10, 11, 31, and 105 each coordinate NADPH. Sn-glycerol 3-phosphate-binding residues include K105, G136, and S138. An NADPH-binding site is contributed by A140. Residues K191, D244, S254, R255, and N256 each coordinate sn-glycerol 3-phosphate. The Proton acceptor role is filled by K191. NADPH is bound at residue R255. NADPH is bound by residues V279 and E281.

Belongs to the NAD-dependent glycerol-3-phosphate dehydrogenase family.

The protein localises to the cytoplasm. The catalysed reaction is sn-glycerol 3-phosphate + NAD(+) = dihydroxyacetone phosphate + NADH + H(+). The enzyme catalyses sn-glycerol 3-phosphate + NADP(+) = dihydroxyacetone phosphate + NADPH + H(+). The protein operates within membrane lipid metabolism; glycerophospholipid metabolism. Its function is as follows. Catalyzes the reduction of the glycolytic intermediate dihydroxyacetone phosphate (DHAP) to sn-glycerol 3-phosphate (G3P), the key precursor for phospholipid synthesis. The polypeptide is Glycerol-3-phosphate dehydrogenase [NAD(P)+] (Leptospira biflexa serovar Patoc (strain Patoc 1 / Ames)).